A 313-amino-acid polypeptide reads, in one-letter code: Glucan 1,3-beta-glucosidase (313 aa).

A signal peptide spans 1–23; sequence MRFSTTLATAATALFFTASQVSA. Residue Glu124 is the Proton donor of the active site. N-linked (GlcNAc...) asparagine glycosylation is present at Asn202. Glu233 serves as the catalytic Nucleophile. N-linked (GlcNAc...) asparagine glycosylation occurs at Asn284.

The protein belongs to the glycosyl hydrolase 17 family.

It localises to the secreted. The protein localises to the cell wall. The catalysed reaction is Successive hydrolysis of beta-D-glucose units from the non-reducing ends of (1-&gt;3)-beta-D-glucans, releasing alpha-glucose.. In terms of biological role, glucanases possibly play a role in cell expansion during growth, in cell-cell fusion during mating, and in spore release during sporulation. This enzyme may be involved in beta-glucan degradation and also function biosynthetically as a transglycosylase. In Saccharomyces cerevisiae (strain ATCC 204508 / S288c) (Baker's yeast), this protein is Glucan 1,3-beta-glucosidase (BGL2).